Here is a 1155-residue protein sequence, read N- to C-terminus: PAN2-PAN3 deadenylation complex catalytic subunit pan2 (1155 aa).

2 WD repeats span residues 102–145 (THED…DKLP) and 276–315 (ANVSFMLGIDLSPSGEALAINDAECAIHLWGSPSKVHFNE). The linker stretch occupies residues 316–452 (MSKEVEFADV…GTKLNGEAED (137 aa)). In terms of domain architecture, USP spans 453–822 (DPLLKYSNVE…VPCVLAYQVK (370 aa)). The 179-residue stretch at 871 to 1049 (VALDTEFVDL…IEDARMALRL (179 aa)) folds into the Exonuclease domain. Aspartate 874, glutamate 876, aspartate 983, and aspartate 1042 together coordinate a divalent metal cation. The segment at 1095–1155 (TAVTMQNNSG…GDFFGGSPLK (61 aa)) is disordered. Residues 1097 to 1106 (VTMQNNSGRN) show a composition bias toward polar residues. Residues 1107–1124 (TPSTPEVTAPTASAPTTP) show a composition bias toward low complexity.

It belongs to the peptidase C19 family. PAN2 subfamily. Forms a heterotrimer with an asymmetric homodimer of the regulatory subunit pan3 to form the poly(A)-nuclease (PAN) deadenylation complex. It depends on a divalent metal cation as a cofactor.

The protein localises to the cytoplasm. It carries out the reaction Exonucleolytic cleavage of poly(A) to 5'-AMP.. Its activity is regulated as follows. Positively regulated by the regulatory subunit pan3. Functionally, catalytic subunit of the poly(A)-nuclease (PAN) deadenylation complex, one of two cytoplasmic mRNA deadenylases involved in mRNA turnover. PAN specifically shortens poly(A) tails of RNA and the activity is stimulated by poly(A)-binding protein pab1. PAN deadenylation is followed by rapid degradation of the shortened mRNA tails by the CCR4-NOT complex. Deadenylated mRNAs are then degraded by two alternative mechanisms, namely exosome-mediated 3'-5' exonucleolytic degradation, or deadenylation-dependent mRNA decaping and subsequent 5'-3' exonucleolytic degradation by xrn1. May also be involved in post-transcriptional maturation of mRNA poly(A) tails. The protein is PAN2-PAN3 deadenylation complex catalytic subunit pan2 of Aspergillus oryzae (strain ATCC 42149 / RIB 40) (Yellow koji mold).